We begin with the raw amino-acid sequence, 206 residues long: dITP/XTP pyrophosphatase (206 aa).

Position 10-15 (10-15 (SRNAKK)) interacts with substrate. Asp75 serves as the catalytic Proton acceptor. A Mg(2+)-binding site is contributed by Asp75. Substrate-binding positions include Ser76, 158–161 (FGYD), Lys181, and 186–187 (HR).

Belongs to the HAM1 NTPase family. As to quaternary structure, homodimer. It depends on Mg(2+) as a cofactor.

The enzyme catalyses XTP + H2O = XMP + diphosphate + H(+). The catalysed reaction is dITP + H2O = dIMP + diphosphate + H(+). It carries out the reaction ITP + H2O = IMP + diphosphate + H(+). In terms of biological role, pyrophosphatase that catalyzes the hydrolysis of nucleoside triphosphates to their monophosphate derivatives, with a high preference for the non-canonical purine nucleotides XTP (xanthosine triphosphate), dITP (deoxyinosine triphosphate) and ITP. Seems to function as a house-cleaning enzyme that removes non-canonical purine nucleotides from the nucleotide pool, thus preventing their incorporation into DNA/RNA and avoiding chromosomal lesions. The protein is dITP/XTP pyrophosphatase of Nocardia farcinica (strain IFM 10152).